The chain runs to 263 residues: Homeobox protein CDX-1 (263 aa).

The segment at 47–108 (PGINSDPHHG…VQPPGSGLLP (62 aa)) is disordered. The segment covering 82–97 (SSANPTQIAFSPSDYN) has biased composition (polar residues). A DNA-binding region (homeobox) is located at residues 150 to 209 (KDKYRVVYTDHQRLELEKEFHYSRYITIRRKAELAAALGLTERQVKIWFQNRRAKERKVN). The segment at 153–174 (YRVVYTDHQRLELEKEFHYSRY) is interaction with DNA. Positions 192–203 (RQVKIWFQNRRA) are interaction with 5-mCpG DNA. A compositionally biased stretch (basic residues) spans 204–213 (KERKVNKKKM). The tract at residues 204 to 263 (KERKVNKKKMQQQSQQASTTTPTPPSVGTTAGMGGLCSSSSSNSNLVSPSSMPIKEEYLS) is disordered. Composition is skewed to low complexity over residues 214–233 (QQQSQQASTTTPTPPSVGTT) and 241–254 (SSSSSNSNLVSPSS).

The protein belongs to the Caudal homeobox family.

The protein localises to the nucleus. Plays a role in transcriptional regulation. Involved in activated KRAS-mediated transcriptional activation of PRKD1. Binds to the PRKD1 promoter. Could play a role in the terminal differentiation of the intestine. Binds preferentially to methylated DNA. This is Homeobox protein CDX-1 (cdx1) from Xenopus laevis (African clawed frog).